The primary structure comprises 1178 residues: Pyruvate carboxylase 1 (1178 aa).

In terms of domain architecture, Biotin carboxylation spans 18–470; sequence EKNKILVANR…WTTFIDDTPQ (453 aa). The ATP site is built by K136, E220, and H255. Residues 140–337 enclose the ATP-grasp domain; sequence RNLAAKANVP…IVAAQIQIAA (198 aa). The active site involves R312. Residues 557 to 824 enclose the Pyruvate carboxyltransferase domain; it reads TLLMDTTWRD…DTGINVEHVR (268 aa). Residues 565-569 and R638 contribute to the substrate site; that span reads RDAHQ. Residue D566 coordinates a divalent metal cation. Residues K734, H764, and H766 each coordinate a divalent metal cation. An N6-carboxylysine modification is found at K734. Residue T898 coordinates substrate. The region spanning 1094 to 1169 is the Biotinyl-binding domain; sequence KADMHDPLHI…DSSDLLVLLE (76 aa). An N6-biotinyllysine modification is found at K1135.

In terms of assembly, homotetramer. Requires biotin as cofactor. Zn(2+) is required as a cofactor.

It is found in the cytoplasm. The catalysed reaction is hydrogencarbonate + pyruvate + ATP = oxaloacetate + ADP + phosphate + H(+). It functions in the pathway carbohydrate biosynthesis; gluconeogenesis. In terms of biological role, pyruvate carboxylase catalyzes a 2-step reaction, involving the ATP-dependent carboxylation of the covalently attached biotin in the first step and the transfer of the carboxyl group to pyruvate in the second. In Saccharomyces cerevisiae (strain ATCC 204508 / S288c) (Baker's yeast), this protein is Pyruvate carboxylase 1 (PYC1).